The chain runs to 180 residues: Pro-glucagon (180 aa).

The N-terminal stretch at 1–20 (MKNIYIVAGFFVVLVQGSWQ) is a signal peptide. The disordered stretch occupies residues 25–59 (DTEEKSRSFPASQTDPLEDPDQINEDKRHSQGTFT). Ser54 bears the Phosphoserine mark. Positions 84-89 (NRNNIA) are excised as a propeptide. Phosphoserine is present on residues Ser105 and Ser108. At Arg127 the chain carries Arginine amide. A propeptide spanning residues 131 to 145 (DFPEEVTIVEELGRR) is cleaved from the precursor. A phosphoserine mark is found at Ser150 and Ser152.

The protein belongs to the glucagon family. In terms of processing, proglucagon is post-translationally processed in a tissue-specific manner in pancreatic A cells and intestinal L cells. In pancreatic A cells, the major bioactive hormone is glucagon cleaved by PCSK2/PC2. In the intestinal L cells PCSK1/PC1 liberates GLP-1, GLP-2, glicentin and oxyntomodulin. GLP-1 is further N-terminally truncated by post-translational processing in the intestinal L cells resulting in GLP-1(7-37) GLP-1-(7-36)amide. The C-terminal amidation is neither important for the metabolism of GLP-1 nor for its effects on the endocrine pancreas.

It localises to the secreted. Functionally, plays a key role in glucose metabolism and homeostasis. Regulates blood glucose by increasing gluconeogenesis and decreasing glycolysis. A counterregulatory hormone of insulin, raises plasma glucose levels in response to insulin-induced hypoglycemia. Plays an important role in initiating and maintaining hyperglycemic conditions in diabetes. Potent stimulator of glucose-dependent insulin release. Also stimulates insulin release in response to IL6. Plays important roles on gastric motility and the suppression of plasma glucagon levels. May be involved in the suppression of satiety and stimulation of glucose disposal in peripheral tissues, independent of the actions of insulin. Has growth-promoting activities on intestinal epithelium. May also regulate the hypothalamic pituitary axis (HPA) via effects on LH, TSH, CRH, oxytocin, and vasopressin secretion. Increases islet mass through stimulation of islet neogenesis and pancreatic beta cell proliferation. Inhibits beta cell apoptosis. In terms of biological role, stimulates intestinal growth and up-regulates villus height in the small intestine, concomitant with increased crypt cell proliferation and decreased enterocyte apoptosis. The gastrointestinal tract, from the stomach to the colon is the principal target for GLP-2 action. Plays a key role in nutrient homeostasis, enhancing nutrient assimilation through enhanced gastrointestinal function, as well as increasing nutrient disposal. Stimulates intestinal glucose transport and decreases mucosal permeability. Its function is as follows. Significantly reduces food intake. Inhibits gastric emptying in humans. Suppression of gastric emptying may lead to increased gastric distension, which may contribute to satiety by causing a sensation of fullness. Functionally, may modulate gastric acid secretion and the gastro-pyloro-duodenal activity. May play an important role in intestinal mucosal growth in the early period of life. The polypeptide is Pro-glucagon (GCG) (Mesocricetus auratus (Golden hamster)).